Reading from the N-terminus, the 67-residue chain is Conotoxin LeDr192 (67 aa).

A signal peptide spans 1–19 (MRCFPVFIILLLLIASAPC). A propeptide spanning residues 20–49 (FDARTKTDDDVPLSPLRDNLKRTIRTRLNI) is cleaved from the precursor. Threonine amide is present on threonine 65.

This sequence belongs to the conotoxin T superfamily. Contains 2 disulfide bonds that can be either 'C1-C3, C2-C4' or 'C1-C4, C2-C3', since these disulfide connectivities have been observed for conotoxins with cysteine framework V (for examples, see AC P0DQQ7 and AC P81755). As to expression, expressed by the venom duct.

The protein resides in the secreted. The polypeptide is Conotoxin LeDr192 (Conus litteratus (Lettered cone)).